Reading from the N-terminus, the 2869-residue chain is uncharacterized protein (2869 aa).

Low complexity predominate over residues 1–10 (MNINRNNIND). 13 disordered regions span residues 1–132 (MNIN…SSNK), 171–349 (NNNN…DNYR), 380–485 (FNES…TSSS), 498–517 (KEKHNKKHENGDISESKPKK), 690–812 (NQNQ…NQNQ), 860–1074 (INNN…INSN), 1108–1175 (INNI…NSNS), 1188–1216 (SNSNGFNNNNSNDQRNIDSSSNSDIVDVD), 1224–1243 (VFIVDDTSSNKSNRASSVKT), 1340–1448 (ESNS…GNNI), 1476–1704 (IDNC…SNYY), 1731–1832 (NSNS…NEGF), and 2725–2773 (DRVR…NNNE). Positions 14 to 25 (HSTSFNDNFDSF) are enriched in polar residues. 5 stretches are compositionally biased toward low complexity: residues 26-124 (GNQN…NPKN), 171-348 (NNNN…YDNY), 388-414 (NNNTNFNNQTFGNNNKNQNNDNNLNNN), 421-446 (YYDNQYNSNIDNIGNSDDSIGGQTNK), and 454-478 (KNNNNNNNNNNNNNNNNNNNNNSNN). Positions 505–514 (HENGDISESK) are enriched in basic and acidic residues. Low complexity-rich tracts occupy residues 690–707 (NQNQKQNQNQNQKNQNHQ) and 714–749 (PQRQRYFPQDKPQNQNNQPPLQHQHQYQYQYQNQDQ). Residues 750–763 (YQDHDHEHEHDHDQ) show a composition bias toward basic and acidic residues. Residues 764–781 (NQNQNQNQHQSRNQNQDQ) show a composition bias toward low complexity. Residues 782 to 795 (YQDHDHEHEHDHDQ) are compositionally biased toward basic and acidic residues. Composition is skewed to low complexity over residues 796 to 812 (NQNQNQYQSQNQQNQNQ), 860 to 891 (INNNNNNNNNNNNNNNNYYNYNQNQNQNQSQN), 898 to 911 (DNRINSNNSLSSRD), 921 to 991 (CDFN…SFNN), and 1000 to 1074 (NNHN…INSN). Over residues 1188 to 1212 (SNSNGFNNNNSNDQRNIDSSSNSDI) the composition is skewed to low complexity. The segment covering 1230 to 1243 (TSSNKSNRASSVKT) has biased composition (polar residues). 2 stretches are compositionally biased toward low complexity: residues 1377-1448 (DNGN…GNNI) and 1476-1639 (IDNC…NDND). A compositionally biased stretch (acidic residues) spans 1640–1659 (IGNDFDNDNDNDSYIDDDNN). 3 stretches are compositionally biased toward low complexity: residues 1660-1704 (VYDN…SNYY), 1731-1823 (NSNS…NNNS), and 2739-2754 (SSSGSSIGNPSSSGGS). Residues 2758–2773 (NLDDSENESDSENNNE) are compositionally biased toward acidic residues.

This is an uncharacterized protein from Dictyostelium discoideum (Social amoeba).